The chain runs to 569 residues: Aspartokinase 1, chloroplastic (569 aa).

The transit peptide at 1–90 (MAATRVRCCH…VDEKGITCVM (90 aa)) directs the protein to the chloroplast. 3 residues coordinate ATP: K91, G94, and S123. E207 contributes to the substrate binding site. ACT domains lie at 405–483 (IAST…AIIS) and 484–560 (LIGN…GNGS). L-lysine-binding residues include Q413 and G415. S-adenosyl-L-methionine is bound at residue S430. V431, D432, and S437 together coordinate L-lysine. Positions 452 and 453 each coordinate S-adenosyl-L-methionine.

It belongs to the aspartokinase family. As to quaternary structure, homodimer.

The protein resides in the plastid. The protein localises to the chloroplast. The catalysed reaction is L-aspartate + ATP = 4-phospho-L-aspartate + ADP. Its pathway is amino-acid biosynthesis; L-lysine biosynthesis via DAP pathway; (S)-tetrahydrodipicolinate from L-aspartate: step 1/4. The protein operates within amino-acid biosynthesis; L-methionine biosynthesis via de novo pathway; L-homoserine from L-aspartate: step 1/3. It functions in the pathway amino-acid biosynthesis; L-threonine biosynthesis; L-threonine from L-aspartate: step 1/5. Inhibited by S-adenosyl-L-methionine (SAM) and lysine in a synergistic manner. No inhibition by threonine, leucine or SAM alone, and no activation or inhibition by alanine, cysteine, isoleucine, serine, valine, methionine, glutamine, asparagine, glutamic acid or arginine. Functionally, involved in the first step of essential amino acids lysine, threonine, methionine and isoleucine synthesis via the aspartate-family pathway. The chain is Aspartokinase 1, chloroplastic (AK1) from Arabidopsis thaliana (Mouse-ear cress).